We begin with the raw amino-acid sequence, 232 residues long: uncharacterized protein (232 aa).

An N-terminal signal peptide occupies residues 1-18 (MGILKSLFTLGKSFISQA). Residues 207–232 (AEAGIGGSNKSSAQDVLARLQRQQGE) are disordered.

The protein belongs to the PspA/Vipp/IM30 family.

This is an uncharacterized protein from Escherichia coli O6:H1 (strain CFT073 / ATCC 700928 / UPEC).